The chain runs to 70 residues: Small ribosomal subunit protein bS21B (70 aa).

The interval 37–70 (SYEKPTTERKRKKAAAVARLRKQVRRSMPPKKKY) is disordered. Residues 45–70 (RKRKKAAAVARLRKQVRRSMPPKKKY) show a composition bias toward basic residues.

It belongs to the bacterial ribosomal protein bS21 family.

The sequence is that of Small ribosomal subunit protein bS21B from Burkholderia pseudomallei (strain K96243).